The sequence spans 864 residues: Leucine--tRNA ligase (864 aa).

A 'HIGH' region motif is present at residues 42–52 (PYPSGKLHMGH). The 'KMSKS' region motif lies at 624 to 628 (KMSKS). ATP is bound at residue Lys627.

Belongs to the class-I aminoacyl-tRNA synthetase family.

It localises to the cytoplasm. The enzyme catalyses tRNA(Leu) + L-leucine + ATP = L-leucyl-tRNA(Leu) + AMP + diphosphate. In Burkholderia mallei (strain ATCC 23344), this protein is Leucine--tRNA ligase.